The sequence spans 337 residues: Anthranilate phosphoribosyltransferase (337 aa).

5-phospho-alpha-D-ribose 1-diphosphate contacts are provided by residues glycine 81, 84–85, serine 89, 91–94, 109–117, and alanine 121; these read GD, NVST, and KHGNRAASS. Glycine 81 lines the anthranilate pocket. Serine 93 contributes to the Mg(2+) binding site. Anthranilate is bound at residue asparagine 112. Arginine 167 provides a ligand contact to anthranilate. Residues aspartate 226 and glutamate 227 each contribute to the Mg(2+) site.

It belongs to the anthranilate phosphoribosyltransferase family. Homodimer. Mg(2+) serves as cofactor.

It catalyses the reaction N-(5-phospho-beta-D-ribosyl)anthranilate + diphosphate = 5-phospho-alpha-D-ribose 1-diphosphate + anthranilate. It functions in the pathway amino-acid biosynthesis; L-tryptophan biosynthesis; L-tryptophan from chorismate: step 2/5. Its function is as follows. Catalyzes the transfer of the phosphoribosyl group of 5-phosphorylribose-1-pyrophosphate (PRPP) to anthranilate to yield N-(5'-phosphoribosyl)-anthranilate (PRA). The polypeptide is Anthranilate phosphoribosyltransferase (Methylobacterium nodulans (strain LMG 21967 / CNCM I-2342 / ORS 2060)).